Consider the following 325-residue polypeptide: NADH-quinone oxidoreductase subunit H (325 aa).

9 consecutive transmembrane segments (helical) span residues 11–31 (ILLS…CGAF), 50–69 (NRVG…KMFF), 81–101 (VIFT…FAIV), 114–134 (IGIL…LFAG), 154–174 (VSYE…AGSF), 186–206 (LWNV…GVAV), 237–257 (FFVG…TLFF), 265–285 (LPPF…FILI), and 304–324 (VCLP…LWQA).

It belongs to the complex I subunit 1 family. As to quaternary structure, NDH-1 is composed of 13 different subunits. Subunits NuoA, H, J, K, L, M, N constitute the membrane sector of the complex.

The protein localises to the cell inner membrane. It carries out the reaction a quinone + NADH + 5 H(+)(in) = a quinol + NAD(+) + 4 H(+)(out). Functionally, NDH-1 shuttles electrons from NADH, via FMN and iron-sulfur (Fe-S) centers, to quinones in the respiratory chain. The immediate electron acceptor for the enzyme in this species is believed to be ubiquinone. Couples the redox reaction to proton translocation (for every two electrons transferred, four hydrogen ions are translocated across the cytoplasmic membrane), and thus conserves the redox energy in a proton gradient. This subunit may bind ubiquinone. The chain is NADH-quinone oxidoreductase subunit H from Salmonella arizonae (strain ATCC BAA-731 / CDC346-86 / RSK2980).